The primary structure comprises 155 residues: Protein PtsT (155 aa).

This chain is Protein PtsT (ptsT), found in Geobacillus stearothermophilus (Bacillus stearothermophilus).